A 65-amino-acid polypeptide reads, in one-letter code: Large ribosomal subunit protein bL35 (65 aa).

This sequence belongs to the bacterial ribosomal protein bL35 family.

The polypeptide is Large ribosomal subunit protein bL35 (Buchnera aphidicola subsp. Acyrthosiphon pisum (strain 5A)).